A 423-amino-acid chain; its full sequence is Large ribosomal subunit protein mL37 (423 aa).

The N-terminal 29 residues, 1–29 (MALASGPAMRALAGSARLGLGGYGAPKRG), are a transit peptide targeting the mitochondrion.

It belongs to the mitochondrion-specific ribosomal protein mL37 family. In terms of assembly, component of the mitochondrial ribosome large subunit (39S) which comprises a 16S rRNA and about 50 distinct proteins.

It is found in the mitochondrion. This chain is Large ribosomal subunit protein mL37 (Mrpl37), found in Rattus norvegicus (Rat).